Consider the following 132-residue polypeptide: Small ribosomal subunit protein uS8 (132 aa).

Belongs to the universal ribosomal protein uS8 family. Part of the 30S ribosomal subunit. Contacts proteins S5 and S12.

One of the primary rRNA binding proteins, it binds directly to 16S rRNA central domain where it helps coordinate assembly of the platform of the 30S subunit. The protein is Small ribosomal subunit protein uS8 of Paramagnetospirillum magneticum (strain ATCC 700264 / AMB-1) (Magnetospirillum magneticum).